We begin with the raw amino-acid sequence, 316 residues long: HTH-type transcriptional regulator PecT (316 aa).

One can recognise an HTH lysR-type domain in the interval 11 to 68; it reads LDLDLLRTFVAVADLNTFAAAAVAVCRTQSAVSQQMQRLEQLIGKELFARHGRNKLLT. The H-T-H motif DNA-binding region spans 28–47; sequence FAAAAVAVCRTQSAVSQQMQ. A disordered region spans residues 293 to 316; it reads LPVSTGTESELREPPTDESLKDIT. Basic and acidic residues predominate over residues 301-316; sequence SELREPPTDESLKDIT.

It belongs to the LysR transcriptional regulatory family.

Functionally, regulates pectinase gene expression. This is HTH-type transcriptional regulator PecT (pecT) from Dickeya dadantii (strain 3937) (Erwinia chrysanthemi (strain 3937)).